Consider the following 204-residue polypeptide: MSEFSYVHTRGWVEVVVGSMFSGKTEELIRRLRRAEFARLQIQVFKPIIDKRYNEMAVTSHDLTTIDSTPIHDAEEIWNLLKPNTKVVGIDEGQFFGQNLVQIAQDLADRGLRVIIAGLDTDWQGKPFEPMPTLMAVAESVTKQHAVCVVCGAPASRTQRTAGGDGQVLVGTHDAYEARCRQHFKPEVDAPTLDWKLKREMEIS.

ATP contacts are provided by residues 18 to 25 and 91 to 94; these read GSMFSGKT and DEGQ. The active-site Proton acceptor is glutamate 92. Zn(2+)-binding residues include cysteine 148, cysteine 151, cysteine 180, and histidine 183.

It belongs to the thymidine kinase family. In terms of assembly, homotetramer.

The protein localises to the cytoplasm. It carries out the reaction thymidine + ATP = dTMP + ADP + H(+). The chain is Thymidine kinase from Bdellovibrio bacteriovorus (strain ATCC 15356 / DSM 50701 / NCIMB 9529 / HD100).